Consider the following 985-residue polypeptide: SWI/SNF complex subunit SWI3D (985 aa).

Positions 1–55 (MEEKRRDSAGTLAFAGSSGDSPASEPMPAPRRRGGGLKRKANALGGSNFFSSAPS) are disordered. Residues 30–41 (PRRRGGGLKRKA) show a composition bias toward basic residues. Residues 108-133 (EKPKEEEERNKAIREWEALEAKIEAD) are a coiled coil. In terms of domain architecture, SWIRM spans 145–242 (HVVPNHCGWF…FHPFPPTDTG (98 aa)). Residues 305 to 359 (AVEYHCNSCSADCSRKRYHCPKQADFDLCTECFNSGKFSSDMSSSDFILMEPAEA) form a ZZ-type; degenerate zinc finger. Zn(2+)-binding residues include C310, C313, C333, and C336. An SANT domain is found at 362-413 (VGSGKWTDQETLLLLEALEIFKENWNEIAEHVATKTKAQCMLHFLQMPIEDA). 3 stretches are compositionally biased toward basic and acidic residues: residues 428–464 (TTDL…KEVP), 493–502 (AEQKTPKLET), and 615–661 (DNSH…EKQP). Disordered regions lie at residues 428–502 (TTDL…KLET) and 591–814 (EDPP…EGKK). Residues 662–671 (GSRTENSTTK) show a composition bias toward polar residues. Residues 703 to 724 (CSGKELQEPLKDGNKLSSENKD) show a composition bias toward basic and acidic residues. A compositionally biased stretch (polar residues) spans 725-736 (ASQSTVSQSAAD). Residues 742 to 776 (ASRDVEMKDTLQSEKDPEDVVKTVGEKVQLAKEEG) are compositionally biased toward basic and acidic residues. Over residues 780-800 (VLSTPDKSVSQQPIGSASAPE) the composition is skewed to polar residues. The stretch at 839 to 900 (ISAAAVKAKN…EQLERSRQRL (62 aa)) forms a coiled coil. Positions 944–985 (MAFPRPPMPRPPGFPVPGSFVAATTMTGSSDPSPGSDNVSSV) are disordered. A compositionally biased stretch (pro residues) spans 947 to 958 (PRPPMPRPPGFP). A compositionally biased stretch (polar residues) spans 965 to 985 (AATTMTGSSDPSPGSDNVSSV).

As to quaternary structure, interacts with SWI3B, but not with BSH. Component of a RNA-directed DNA methylation (RdDM) complex that contains at least MORC6, MORC1/CRT1, MORC2, SWI3D and SUVH9. Interacts with MORC6 and SUVH9. In terms of tissue distribution, ubiquitously expressed.

It is found in the nucleus. Its function is as follows. Component of a multiprotein complex equivalent of the SWI/SNF complex, an ATP-dependent chromatin-remodeling complex, which is required for the positive and negative regulation of gene expression of a large number of genes. It changes chromatin structure by altering DNA-histone contacts within a nucleosome, leading eventually to a change in nucleosome position, thus facilitating or repressing binding of gene-specific transcription factors. The protein is SWI/SNF complex subunit SWI3D (SWI3D) of Arabidopsis thaliana (Mouse-ear cress).